A 212-amino-acid polypeptide reads, in one-letter code: tRNA (guanine-N(7)-)-methyltransferase (212 aa).

S-adenosyl-L-methionine-binding residues include Glu-44, Glu-69, Asp-96, and Asp-118. Residue Asp-118 is part of the active site. Lys-122 contacts substrate. The tract at residues 124–129 (RHEKRR) is interaction with RNA. Residues Asp-154 and 192–195 (TEYE) each bind substrate.

The protein belongs to the class I-like SAM-binding methyltransferase superfamily. TrmB family.

The catalysed reaction is guanosine(46) in tRNA + S-adenosyl-L-methionine = N(7)-methylguanosine(46) in tRNA + S-adenosyl-L-homocysteine. It functions in the pathway tRNA modification; N(7)-methylguanine-tRNA biosynthesis. Catalyzes the formation of N(7)-methylguanine at position 46 (m7G46) in tRNA. The sequence is that of tRNA (guanine-N(7)-)-methyltransferase from Pediococcus pentosaceus (strain ATCC 25745 / CCUG 21536 / LMG 10740 / 183-1w).